Here is a 192-residue protein sequence, read N- to C-terminus: uncharacterized protein (192 aa).

The 132-residue stretch at 29 to 160 folds into the Nudix hydrolase domain; it reads HRQAAVLIPI…PLDIYRRGDS (132 aa). The Nudix box signature appears at 67–89; it reads GAVDDTDASVIAAALREAEEEVA. The Mg(2+) site is built by Glu83 and Glu87.

It belongs to the Nudix hydrolase family. PCD1 subfamily. Mn(2+) is required as a cofactor. Mg(2+) serves as cofactor.

Functionally, probably mediates the hydrolysis of some nucleoside diphosphate derivatives. This is an uncharacterized protein from Shigella sonnei (strain Ss046).